The following is a 393-amino-acid chain: Diphosphomevalonate decarboxylase (393 aa).

(R)-5-diphosphomevalonate contacts are provided by residues 21–24 (YWGK), Arg77, 156–161 (SGSACR), and Thr212.

Belongs to the diphosphomevalonate decarboxylase family. As to quaternary structure, homodimer.

It is found in the cytoplasm. The protein localises to the nucleus. The catalysed reaction is (R)-5-diphosphomevalonate + ATP = isopentenyl diphosphate + ADP + phosphate + CO2. The protein operates within isoprenoid biosynthesis; isopentenyl diphosphate biosynthesis via mevalonate pathway; isopentenyl diphosphate from (R)-mevalonate: step 3/3. Its function is as follows. Diphosphomevalonate decarboxylase; part of the second module of ergosterol biosynthesis pathway that includes the middle steps of the pathway. Mvd1 converts diphosphomevalonate into isopentenyl diphosphate. The second module is carried out in the vacuole and involves the formation of farnesyl diphosphate, which is also an important intermediate in the biosynthesis of ubiquinone, dolichol, heme and prenylated proteins. Activity by the mevalonate kinase erg12 first converts mevalonate into 5-phosphomevalonate. 5-phosphomevalonate is then further converted to 5-diphosphomevalonate by the phosphomevalonate kinase erg8. The diphosphomevalonate decarboxylase mvd1 then produces isopentenyl diphosphate. The isopentenyl-diphosphate delta-isomerase idi1 then catalyzes the 1,3-allylic rearrangement of the homoallylic substrate isopentenyl (IPP) to its highly electrophilic allylic isomer, dimethylallyl diphosphate (DMAPP). Finally the farnesyl diphosphate synthase fps1 catalyzes the sequential condensation of isopentenyl pyrophosphate with dimethylallyl pyrophosphate, and then with the resultant geranylpyrophosphate to the ultimate product farnesyl pyrophosphate. This chain is Diphosphomevalonate decarboxylase (mvd1), found in Schizosaccharomyces pombe (strain 972 / ATCC 24843) (Fission yeast).